A 260-amino-acid chain; its full sequence is F-actin-capping protein subunit beta (260 aa).

This sequence belongs to the F-actin-capping protein beta subunit family. Component of the F-actin capping complex, composed of a heterodimer of an alpha and a beta subunit.

The protein resides in the cytoplasm. Its subcellular location is the cytoskeleton. The protein localises to the actin patch. Functionally, F-actin-capping proteins bind in a Ca(2+)-independent manner to the fast growing ends of actin filaments (barbed end) thereby blocking the exchange of subunits at these ends. Unlike other capping proteins (such as gelsolin and severin), these proteins do not sever actin filaments. This is F-actin-capping protein subunit beta (CAP2) from Yarrowia lipolytica (strain CLIB 122 / E 150) (Yeast).